The chain runs to 258 residues: Phosphate import ATP-binding protein PstB (258 aa).

The ABC transporter domain maps to 5–253 (LDLNDVNIYY…PTKKETEDYI (249 aa)). Residue 37-44 (GPSGCGKS) participates in ATP binding.

The protein belongs to the ABC transporter superfamily. Phosphate importer (TC 3.A.1.7) family. As to quaternary structure, the complex is composed of two ATP-binding proteins (PstB), two transmembrane proteins (PstC and PstA) and a solute-binding protein (PstS).

It localises to the cell membrane. It catalyses the reaction phosphate(out) + ATP + H2O = ADP + 2 phosphate(in) + H(+). Part of the ABC transporter complex PstSACB involved in phosphate import. Responsible for energy coupling to the transport system. The protein is Phosphate import ATP-binding protein PstB of Corynebacterium jeikeium (strain K411).